Reading from the N-terminus, the 427-residue chain is Imidazolonepropionase (427 aa).

H78 and H80 together coordinate Fe(3+). Zn(2+) contacts are provided by H78 and H80. 3 residues coordinate 4-imidazolone-5-propanoate: R87, Y150, and H183. Y150 serves as a coordination point for N-formimidoyl-L-glutamate. H255 is a Fe(3+) binding site. Residue H255 coordinates Zn(2+). A 4-imidazolone-5-propanoate-binding site is contributed by E258. D330 provides a ligand contact to Fe(3+). D330 provides a ligand contact to Zn(2+). Positions 332 and 334 each coordinate N-formimidoyl-L-glutamate. Position 335 (T335) interacts with 4-imidazolone-5-propanoate.

This sequence belongs to the metallo-dependent hydrolases superfamily. HutI family. Zn(2+) serves as cofactor. It depends on Fe(3+) as a cofactor.

Its subcellular location is the cytoplasm. It catalyses the reaction 4-imidazolone-5-propanoate + H2O = N-formimidoyl-L-glutamate. The protein operates within amino-acid degradation; L-histidine degradation into L-glutamate; N-formimidoyl-L-glutamate from L-histidine: step 3/3. Catalyzes the hydrolytic cleavage of the carbon-nitrogen bond in imidazolone-5-propanoate to yield N-formimidoyl-L-glutamate. It is the third step in the universal histidine degradation pathway. This Herpetosiphon aurantiacus (strain ATCC 23779 / DSM 785 / 114-95) protein is Imidazolonepropionase.